A 393-amino-acid chain; its full sequence is Elongation factor Tu (393 aa).

A tr-type G domain is found at 10–202 (KPHVNIGTIG…AVDEYIPTPE (193 aa)). Residues 19 to 26 (GHVDHGKT) are G1. Position 19-26 (19-26 (GHVDHGKT)) interacts with GTP. Residue Thr26 coordinates Mg(2+). Residues 60 to 64 (GITIN) form a G2 region. Residues 81–84 (DCPG) form a G3 region. Residues 81 to 85 (DCPGH) and 136 to 139 (NKAD) each bind GTP. The interval 136–139 (NKAD) is G4. The tract at residues 174-176 (SAL) is G5.

This sequence belongs to the TRAFAC class translation factor GTPase superfamily. Classic translation factor GTPase family. EF-Tu/EF-1A subfamily. Monomer.

It localises to the cytoplasm. The enzyme catalyses GTP + H2O = GDP + phosphate + H(+). Functionally, GTP hydrolase that promotes the GTP-dependent binding of aminoacyl-tRNA to the A-site of ribosomes during protein biosynthesis. The polypeptide is Elongation factor Tu (Clostridium novyi (strain NT)).